The sequence spans 321 residues: Glucokinase (321 aa).

ATP is bound at residue 8–13 (GDVGGT).

Belongs to the bacterial glucokinase family.

It is found in the cytoplasm. The enzyme catalyses D-glucose + ATP = D-glucose 6-phosphate + ADP + H(+). The chain is Glucokinase from Shigella flexneri serotype 5b (strain 8401).